The primary structure comprises 210 residues: Urease accessory protein UreG (210 aa).

Gly15–Thr22 is a binding site for GTP.

It belongs to the SIMIBI class G3E GTPase family. UreG subfamily. In terms of assembly, homodimer. UreD, UreF and UreG form a complex that acts as a GTP-hydrolysis-dependent molecular chaperone, activating the urease apoprotein by helping to assemble the nickel containing metallocenter of UreC. The UreE protein probably delivers the nickel.

It localises to the cytoplasm. Its function is as follows. Facilitates the functional incorporation of the urease nickel metallocenter. This process requires GTP hydrolysis, probably effectuated by UreG. The chain is Urease accessory protein UreG from Ralstonia nicotianae (strain ATCC BAA-1114 / GMI1000) (Ralstonia solanacearum).